A 58-amino-acid polypeptide reads, in one-letter code: Large ribosomal subunit protein uL30 (58 aa).

The protein belongs to the universal ribosomal protein uL30 family. Part of the 50S ribosomal subunit.

This chain is Large ribosomal subunit protein uL30, found in Pseudomonas aeruginosa (strain LESB58).